The sequence spans 212 residues: Large ribosomal subunit protein uL3 (212 aa).

The disordered stretch occupies residues 119–147 (YQGNIKRWGQSRGPETHGSRYHRIPGSMG).

This sequence belongs to the universal ribosomal protein uL3 family. Part of the 50S ribosomal subunit. Forms a cluster with proteins L14 and L19.

One of the primary rRNA binding proteins, it binds directly near the 3'-end of the 23S rRNA, where it nucleates assembly of the 50S subunit. This Lactobacillus acidophilus (strain ATCC 700396 / NCK56 / N2 / NCFM) protein is Large ribosomal subunit protein uL3.